Consider the following 231-residue polypeptide: Endonuclease NucS (231 aa).

Belongs to the NucS endonuclease family.

The protein localises to the cytoplasm. Cleaves both 3' and 5' ssDNA extremities of branched DNA structures. The sequence is that of Endonuclease NucS from Kocuria rhizophila (strain ATCC 9341 / DSM 348 / NBRC 103217 / DC2201).